The primary structure comprises 316 residues: MSDSLRIIFAGTPDFAARHLAALLSTQHHIVGVLTPPDKPAGRGKKLTINPVKELALTNNIPVYQPTSLKPEENHEWIKALQPDVMIVVAYGMILPKAVLDIPRLGCLNVHGSLLPKWRGAAPIQRALWAGDTETGVTIMQMDVGLDTGDMLYKASCPITHQDTSASLYAKLAELGPKALINTLDLIISGELKAEKQDDSLANYAEKLSKEEAKINWSLSAQQIERCIRAFNPWPMSFFMLDDQPVKVWEAQVIASDNTNQIPGTLLKADKTGIYIVTGEGILNITKLQPSGKKPMASADFLNSKRDWFTPGKIIQ.

A (6S)-5,6,7,8-tetrahydrofolate-binding site is contributed by 113 to 116 (SLLP).

This sequence belongs to the Fmt family.

The enzyme catalyses L-methionyl-tRNA(fMet) + (6R)-10-formyltetrahydrofolate = N-formyl-L-methionyl-tRNA(fMet) + (6S)-5,6,7,8-tetrahydrofolate + H(+). Attaches a formyl group to the free amino group of methionyl-tRNA(fMet). The formyl group appears to play a dual role in the initiator identity of N-formylmethionyl-tRNA by promoting its recognition by IF2 and preventing the misappropriation of this tRNA by the elongation apparatus. The chain is Methionyl-tRNA formyltransferase from Proteus mirabilis (strain HI4320).